We begin with the raw amino-acid sequence, 418 residues long: Serine hydroxymethyltransferase (418 aa).

(6S)-5,6,7,8-tetrahydrofolate-binding positions include Leu121 and 125 to 127 (GHL). Position 230 is an N6-(pyridoxal phosphate)lysine (Lys230). 356-358 (SPF) serves as a coordination point for (6S)-5,6,7,8-tetrahydrofolate.

This sequence belongs to the SHMT family. In terms of assembly, homodimer. It depends on pyridoxal 5'-phosphate as a cofactor.

The protein localises to the cytoplasm. It catalyses the reaction (6R)-5,10-methylene-5,6,7,8-tetrahydrofolate + glycine + H2O = (6S)-5,6,7,8-tetrahydrofolate + L-serine. Its pathway is one-carbon metabolism; tetrahydrofolate interconversion. It functions in the pathway amino-acid biosynthesis; glycine biosynthesis; glycine from L-serine: step 1/1. Catalyzes the reversible interconversion of serine and glycine with tetrahydrofolate (THF) serving as the one-carbon carrier. This reaction serves as the major source of one-carbon groups required for the biosynthesis of purines, thymidylate, methionine, and other important biomolecules. Also exhibits THF-independent aldolase activity toward beta-hydroxyamino acids, producing glycine and aldehydes, via a retro-aldol mechanism. The chain is Serine hydroxymethyltransferase from Pseudoalteromonas translucida (strain TAC 125).